Here is a 444-residue protein sequence, read N- to C-terminus: Phosphoglucosamine mutase (444 aa).

Ser-104 acts as the Phosphoserine intermediate in catalysis. Residues Ser-104, Asp-243, Asp-245, and Asp-247 each contribute to the Mg(2+) site. Phosphoserine is present on Ser-104.

This sequence belongs to the phosphohexose mutase family. It depends on Mg(2+) as a cofactor. Post-translationally, activated by phosphorylation.

The catalysed reaction is alpha-D-glucosamine 1-phosphate = D-glucosamine 6-phosphate. Catalyzes the conversion of glucosamine-6-phosphate to glucosamine-1-phosphate. This Neisseria meningitidis serogroup C / serotype 2a (strain ATCC 700532 / DSM 15464 / FAM18) protein is Phosphoglucosamine mutase.